The following is a 228-amino-acid chain: Probable septum site-determining protein MinC (228 aa).

The protein belongs to the MinC family. Interacts with MinD and FtsZ.

Cell division inhibitor that blocks the formation of polar Z ring septums. Rapidly oscillates between the poles of the cell to destabilize FtsZ filaments that have formed before they mature into polar Z rings. Prevents FtsZ polymerization. The polypeptide is Probable septum site-determining protein MinC (Bacillus cereus (strain G9842)).